A 244-amino-acid chain; its full sequence is Mitochondrial import inner membrane translocase subunit Tim21 (244 aa).

Residues 1 to 18 constitute a mitochondrion transit peptide; it reads MICTLLRAVRCTERLHGC. Residues 69-89 form a disordered region; it reads VRSPQSAKEDGSKQVSVHRSQ. A helical membrane pass occupies residues 108–128; sequence FTYLIVVLIGISITGGLFYTI.

Belongs to the TIM21 family. In terms of assembly, component of the TIM23 complex. Component of the MITRAC (mitochondrial translation regulation assembly intermediate of cytochrome c oxidase complex) complex, the core components of this complex being COA3/MITRAC12 and COX14. Interacts with COA3 and MT-CO1/COX1.

Its subcellular location is the mitochondrion membrane. Its function is as follows. Participates in the translocation of transit peptide-containing proteins across the mitochondrial inner membrane. Also required for assembly of mitochondrial respiratory chain complex I and complex IV as component of the MITRAC (mitochondrial translation regulation assembly intermediate of cytochrome c oxidase complex) complex. Probably shuttles between the presequence translocase and respiratory-chain assembly intermediates in a process that promotes incorporation of early nuclear-encoded subunits into these complexes. The sequence is that of Mitochondrial import inner membrane translocase subunit Tim21 (TIMM21) from Bos taurus (Bovine).